We begin with the raw amino-acid sequence, 252 residues long: Probable aquaporin TIP1-2 (252 aa).

2 helical membrane passes run valine 24 to phenylalanine 44 and glycine 57 to alanine 77. The NPA 1 motif lies at asparagine 85 to alanine 87. 3 consecutive transmembrane segments (helical) span residues valine 115–alanine 137, alanine 144–valine 164, and valine 173–phenylalanine 193. The short motif at asparagine 199–alanine 201 is the NPA 2 element. A helical membrane pass occupies residues tryptophan 220–glycine 240.

It belongs to the MIP/aquaporin (TC 1.A.8) family. TIP (TC 1.A.8.10) subfamily. In terms of tissue distribution, expressed in leaves.

Its subcellular location is the vacuole membrane. Functionally, aquaporins facilitate the transport of water and small neutral solutes across cell membranes. May be involved in transport from the vacuolar compartment to the cytoplasm. The polypeptide is Probable aquaporin TIP1-2 (TIP1-2) (Oryza sativa subsp. japonica (Rice)).